Reading from the N-terminus, the 294-residue chain is Bifunctional protein FolD (294 aa).

Residues 176–178 (GAS), Ser-201, and Ile-242 contribute to the NADP(+) site.

It belongs to the tetrahydrofolate dehydrogenase/cyclohydrolase family. Homodimer.

It carries out the reaction (6R)-5,10-methylene-5,6,7,8-tetrahydrofolate + NADP(+) = (6R)-5,10-methenyltetrahydrofolate + NADPH. The enzyme catalyses (6R)-5,10-methenyltetrahydrofolate + H2O = (6R)-10-formyltetrahydrofolate + H(+). It participates in one-carbon metabolism; tetrahydrofolate interconversion. In terms of biological role, catalyzes the oxidation of 5,10-methylenetetrahydrofolate to 5,10-methenyltetrahydrofolate and then the hydrolysis of 5,10-methenyltetrahydrofolate to 10-formyltetrahydrofolate. The chain is Bifunctional protein FolD from Bordetella petrii (strain ATCC BAA-461 / DSM 12804 / CCUG 43448).